Consider the following 233-residue polypeptide: MEETMAEEGCCENVESTFDDGTNCISKTEDTGGIESKRFYLARTTAFEMLRDRGYEVNEAELSLTLSEFRSVFGEKPELERLRICVPLRSDPKKKILVVFMGTEPITVKSVRALHIQISNNVGLHAMILVLQSKMNHFAQKALTTFPFTVETFPIEDLLVNITKHIQQPKIEILNKEEKEQLLRKHALEDKQLPYLQEKDSFVRYYGLKKKQVVKITYSKEPVGDFVTYRCII.

The protein belongs to the archaeal Rpo5/eukaryotic RPB5 RNA polymerase subunit family. As to quaternary structure, component of the RNA polymerase V complex. In terms of tissue distribution, expressed in flower buds and siliques.

It is found in the nucleus. DNA-dependent RNA polymerase catalyzes the transcription of DNA into RNA using the four ribonucleoside triphosphates as substrates. Component of RNA polymerase V involved in RNA-directed DNA methylation-dependent (RdDM) silencing of endogenous repeated sequences, including transposable elements. The sequence is that of DNA-directed RNA polymerase V subunit 5C (NRPE5C) from Arabidopsis thaliana (Mouse-ear cress).